Consider the following 106-residue polypeptide: 3-phenylpropionate/cinnamic acid dioxygenase ferredoxin subunit (106 aa).

Residues 4–99 form the Rieske domain; that stretch reads IYACPVADVP…VHVEGSDIFI (96 aa). The [2Fe-2S] cluster site is built by Cys42, His44, Cys62, and His65.

The protein belongs to the bacterial ring-hydroxylating dioxygenase ferredoxin component family. In terms of assembly, this dioxygenase system consists of four proteins: the two subunits of the hydroxylase component (HcaE and HcaF), a ferredoxin (HcaC) and a ferredoxin reductase (HcaD). [2Fe-2S] cluster is required as a cofactor.

It participates in aromatic compound metabolism; 3-phenylpropanoate degradation. Its function is as follows. Part of the multicomponent 3-phenylpropionate dioxygenase, that converts 3-phenylpropionic acid (PP) and cinnamic acid (CI) into 3-phenylpropionate-dihydrodiol (PP-dihydrodiol) and cinnamic acid-dihydrodiol (CI-dihydrodiol), respectively. This protein seems to be a 2Fe-2S ferredoxin. This chain is 3-phenylpropionate/cinnamic acid dioxygenase ferredoxin subunit, found in Shigella boydii serotype 4 (strain Sb227).